The chain runs to 199 residues: Putative pseudouridine methyltransferase (199 aa).

Positions 132 and 186 each coordinate S-adenosyl-L-methionine.

Belongs to the methyltransferase superfamily. TrmY family.

The protein resides in the cytoplasm. This is Putative pseudouridine methyltransferase from Vibrio atlanticus (strain LGP32) (Vibrio splendidus (strain Mel32)).